The following is a 324-amino-acid chain: tRNA N6-adenosine threonylcarbamoyltransferase (324 aa).

The Fe cation site is built by histidine 107, histidine 111, and tyrosine 127. Substrate-binding positions include 127-131 (YVSGG), aspartate 159, glycine 172, glutamate 176, and asparagine 257. Aspartate 285 lines the Fe cation pocket.

Belongs to the KAE1 / TsaD family. Monomer. Component of the KEOPS complex that consists of Kae1, Bud32, Cgi121 and Pcc1; the whole complex dimerizes. The cofactor is Fe(2+).

Its subcellular location is the cytoplasm. The enzyme catalyses L-threonylcarbamoyladenylate + adenosine(37) in tRNA = N(6)-L-threonylcarbamoyladenosine(37) in tRNA + AMP + H(+). In terms of biological role, required for the formation of a threonylcarbamoyl group on adenosine at position 37 (t(6)A37) in tRNAs that read codons beginning with adenine. Is a component of the KEOPS complex that is probably involved in the transfer of the threonylcarbamoyl moiety of threonylcarbamoyl-AMP (TC-AMP) to the N6 group of A37. Kae1 likely plays a direct catalytic role in this reaction, but requires other protein(s) of the complex to fulfill this activity. The chain is tRNA N6-adenosine threonylcarbamoyltransferase from Pyrococcus furiosus (strain ATCC 43587 / DSM 3638 / JCM 8422 / Vc1).